The primary structure comprises 488 residues: Acetyl-coenzyme A carboxylase carboxyl transferase subunit beta, chloroplastic (488 aa).

The CoA carboxyltransferase N-terminal domain occupies 224 to 488 (LWIQCDNCYG…FFPLNKNEIK (265 aa)). 4 residues coordinate Zn(2+): Cys228, Cys231, Cys244, and Cys247. The C4-type zinc-finger motif lies at 228-247 (CDNCYGLMYKKVEMNVCEEC).

Belongs to the AccD/PCCB family. As to quaternary structure, acetyl-CoA carboxylase is a heterohexamer composed of biotin carboxyl carrier protein, biotin carboxylase and 2 subunits each of ACCase subunit alpha and ACCase plastid-coded subunit beta (accD). Requires Zn(2+) as cofactor.

The protein resides in the plastid. The protein localises to the chloroplast stroma. The catalysed reaction is N(6)-carboxybiotinyl-L-lysyl-[protein] + acetyl-CoA = N(6)-biotinyl-L-lysyl-[protein] + malonyl-CoA. It participates in lipid metabolism; malonyl-CoA biosynthesis; malonyl-CoA from acetyl-CoA: step 1/1. Its function is as follows. Component of the acetyl coenzyme A carboxylase (ACC) complex. Biotin carboxylase (BC) catalyzes the carboxylation of biotin on its carrier protein (BCCP) and then the CO(2) group is transferred by the transcarboxylase to acetyl-CoA to form malonyl-CoA. The sequence is that of Acetyl-coenzyme A carboxylase carboxyl transferase subunit beta, chloroplastic from Arabis hirsuta (Hairy rock-cress).